A 486-amino-acid polypeptide reads, in one-letter code: Protein nucleotidyltransferase YdiU (486 aa).

ATP contacts are provided by glycine 89, glycine 91, arginine 92, lysine 112, aspartate 124, glycine 125, arginine 175, and arginine 182. Aspartate 251 acts as the Proton acceptor in catalysis. Residues asparagine 252 and aspartate 261 each coordinate Mg(2+). Aspartate 261 contacts ATP.

This sequence belongs to the SELO family. It depends on Mg(2+) as a cofactor. Mn(2+) serves as cofactor.

The enzyme catalyses L-seryl-[protein] + ATP = 3-O-(5'-adenylyl)-L-seryl-[protein] + diphosphate. It carries out the reaction L-threonyl-[protein] + ATP = 3-O-(5'-adenylyl)-L-threonyl-[protein] + diphosphate. The catalysed reaction is L-tyrosyl-[protein] + ATP = O-(5'-adenylyl)-L-tyrosyl-[protein] + diphosphate. It catalyses the reaction L-histidyl-[protein] + UTP = N(tele)-(5'-uridylyl)-L-histidyl-[protein] + diphosphate. The enzyme catalyses L-seryl-[protein] + UTP = O-(5'-uridylyl)-L-seryl-[protein] + diphosphate. It carries out the reaction L-tyrosyl-[protein] + UTP = O-(5'-uridylyl)-L-tyrosyl-[protein] + diphosphate. In terms of biological role, nucleotidyltransferase involved in the post-translational modification of proteins. It can catalyze the addition of adenosine monophosphate (AMP) or uridine monophosphate (UMP) to a protein, resulting in modifications known as AMPylation and UMPylation. The sequence is that of Protein nucleotidyltransferase YdiU from Shouchella clausii (strain KSM-K16) (Alkalihalobacillus clausii).